A 180-amino-acid chain; its full sequence is MEVKMIILLFQILAISTLKSDSADIPEGYIQENVALRGRATQSAQLKGEFAGFAHASNAIDGNRDSNYHHGSCSHTEGDNSWWRVDLKQVYTITSVTITNRGDCCGERISGARILIGKHLENNGINNPECSTINIMAAGETKTFHCPQPMIGRYVTVYLPKAESLQLCEVEVNVLFPAPC.

Residues 1 to 22 form the signal peptide; the sequence is MEVKMIILLFQILAISTLKSDS. The F5/8 type C-like stretch occupies residues 31-179; it reads QENVALRGRA…VEVNVLFPAP (149 aa). The Ca(2+) site is built by Asn58, Asp61, Asn63, and Ser72. 3 disulfides stabilise this stretch: Cys73/Cys168, Cys104/Cys105, and Cys130/Cys146. Alpha-L-fucose contacts are provided by His75 and Arg101. Residues 101–103 carry the Cell attachment site motif; the sequence is RGD. Arg108 is a binding site for alpha-L-fucose. Ca(2+) is bound by residues Cys168 and Glu169.

It belongs to the fucolectin family. In terms of assembly, homotrimer. In terms of tissue distribution, parenchymal hepatocytes.

Its subcellular location is the secreted. It localises to the extracellular space. Functionally, acts as a defensive agent. Recognizes blood group fucosylated oligosaccharides including A, B, H and Lewis B-type antigens. Does not recognize Lewis A antigen and has low affinity for monovalent haptens. In Anguilla japonica (Japanese eel), this protein is Fucolectin-3.